The chain runs to 387 residues: Probable NADH-dependent butanol dehydrogenase 1 (387 aa).

Belongs to the iron-containing alcohol dehydrogenase family.

It participates in alcohol metabolism; butanol biosynthesis. The chain is Probable NADH-dependent butanol dehydrogenase 1 (yugJ) from Bacillus subtilis (strain 168).